The following is a 372-amino-acid chain: 4-hydroxy-3-methylbut-2-en-1-yl diphosphate synthase (flavodoxin) (372 aa).

Positions 270, 273, 305, and 312 each coordinate [4Fe-4S] cluster.

Belongs to the IspG family. The cofactor is [4Fe-4S] cluster.

The catalysed reaction is (2E)-4-hydroxy-3-methylbut-2-enyl diphosphate + oxidized [flavodoxin] + H2O + 2 H(+) = 2-C-methyl-D-erythritol 2,4-cyclic diphosphate + reduced [flavodoxin]. It functions in the pathway isoprenoid biosynthesis; isopentenyl diphosphate biosynthesis via DXP pathway; isopentenyl diphosphate from 1-deoxy-D-xylulose 5-phosphate: step 5/6. In terms of biological role, converts 2C-methyl-D-erythritol 2,4-cyclodiphosphate (ME-2,4cPP) into 1-hydroxy-2-methyl-2-(E)-butenyl 4-diphosphate. In Escherichia coli O9:H4 (strain HS), this protein is 4-hydroxy-3-methylbut-2-en-1-yl diphosphate synthase (flavodoxin).